The primary structure comprises 209 residues: Thymidylate kinase (209 aa).

Position 13–20 (13–20 (GLEGAGKS)) interacts with ATP.

It belongs to the thymidylate kinase family.

It carries out the reaction dTMP + ATP = dTDP + ADP. Its function is as follows. Phosphorylation of dTMP to form dTDP in both de novo and salvage pathways of dTTP synthesis. The sequence is that of Thymidylate kinase from Shewanella sp. (strain MR-4).